The primary structure comprises 40 residues: Bacterioferritin heavy chain (40 aa).

The Ferritin-like diiron domain maps to 1–40; the sequence is MRGNPEVIDYLNMLIGGELAARDQYLIHSRMYEDWGLTKY. E18 lines the Fe cation pocket.

This sequence belongs to the bacterioferritin family. In terms of assembly, oligomer consisting of two types of subunits: light chain and heavy chain.

May perform analogous functions in iron detoxification and storage to that of animal ferritins. Contains approximately 750 iron atoms per molecule. This Absidia spinosa protein is Bacterioferritin heavy chain.